A 351-amino-acid chain; its full sequence is Tryptophan--tRNA ligase 2 (351 aa).

Positions 1 to 24 (MPFVDLEVPTMTTPTPAATPARPR) are disordered. The segment covering 9 to 24 (PTMTTPTPAATPARPR) has biased composition (low complexity). Residues 31–39 (PTGALHLGH) carry the 'HIGH' region motif. The 'KMSKS' region motif lies at 215–219 (KMSKS). K218 is an ATP binding site.

This sequence belongs to the class-I aminoacyl-tRNA synthetase family. As to quaternary structure, homodimer. Forms a complex with nos; one homodimer of trpS2 binds one homodimer of nos.

The catalysed reaction is tRNA(Trp) + L-tryptophan + ATP = L-tryptophyl-tRNA(Trp) + AMP + diphosphate + H(+). In terms of biological role, catalyzes the formation of 5'adenyl-Trp and tRNA(Trp) but with 5-fold less activity than TrpRS. Increases the solubility of the nitric oxide synthase oxygenase (nos), as well as its affinity for substrate L-arginine and its nitric-oxide synthase activity. The complex between trpS2 and nos catalyzes the regioselective nitration of tryptophan at the 4-position. This chain is Tryptophan--tRNA ligase 2 (trpS2), found in Deinococcus radiodurans (strain ATCC 13939 / DSM 20539 / JCM 16871 / CCUG 27074 / LMG 4051 / NBRC 15346 / NCIMB 9279 / VKM B-1422 / R1).